Here is a 368-residue protein sequence, read N- to C-terminus: Polymerase delta-interacting protein 2 (368 aa).

Residues Met1–Leu21 constitute a mitochondrion transit peptide. Residues Arg235–Lys360 form the ApaG domain. Residue Thr292 is modified to Phosphothreonine.

Interacts with PCNA and POLD2. Interacts with SSBP1. Interacts with PRIMPOL; leading to enhance DNA polymerase activity of PRIMPOL. Interacts with POLH. Interacts with POLD1; leading to stimulate DNA polymerase activity of POLD1.

It is found in the mitochondrion matrix. The protein resides in the nucleus. In terms of biological role, involved in DNA damage tolerance by regulating translesion synthesis (TLS) of templates carrying DNA damage lesions such as 8oxoG and abasic sites. May act by stimulating activity of DNA polymerases involved in TLS, such as PRIMPOL and polymerase delta (POLD1). The polypeptide is Polymerase delta-interacting protein 2 (Mus musculus (Mouse)).